Here is a 60-residue protein sequence, read N- to C-terminus: Large ribosomal subunit protein eL37 (60 aa).

Zn(2+) contacts are provided by Cys-19, Cys-22, Cys-34, and Cys-37. Residues 19–37 form a C4-type zinc finger; it reads CRRCGRISFHAQKKVCSSC.

Belongs to the eukaryotic ribosomal protein eL37 family. Requires Zn(2+) as cofactor.

Functionally, binds to the 23S rRNA. This chain is Large ribosomal subunit protein eL37, found in Methanoregula boonei (strain DSM 21154 / JCM 14090 / 6A8).